The primary structure comprises 144 residues: Large ribosomal subunit protein uL16 (144 aa).

The protein belongs to the universal ribosomal protein uL16 family. Part of the 50S ribosomal subunit.

Functionally, binds 23S rRNA and is also seen to make contacts with the A and possibly P site tRNAs. The sequence is that of Large ribosomal subunit protein uL16 from Novosphingobium aromaticivorans (strain ATCC 700278 / DSM 12444 / CCUG 56034 / CIP 105152 / NBRC 16084 / F199).